Here is a 459-residue protein sequence, read N- to C-terminus: GTPase Der (459 aa).

2 EngA-type G domains span residues 3 to 167 (FTLA…PEPV) and 188 to 363 (IRVA…AVWN). Residues 9 to 16 (GRPNVGKS), 56 to 60 (DTAGL), 119 to 122 (NKSE), 194 to 201 (GRPNAGKS), 241 to 245 (DTAGL), and 306 to 309 (NKWD) contribute to the GTP site. The KH-like domain maps to 364 to 448 (RRVPTAALNR…PVRITLREKA (85 aa)).

This sequence belongs to the TRAFAC class TrmE-Era-EngA-EngB-Septin-like GTPase superfamily. EngA (Der) GTPase family. In terms of assembly, associates with the 50S ribosomal subunit.

GTPase that plays an essential role in the late steps of ribosome biogenesis. In Rhodopseudomonas palustris (strain TIE-1), this protein is GTPase Der.